The sequence spans 306 residues: Glutathione transport system permease protein GsiC (306 aa).

The Cytoplasmic portion of the chain corresponds to 1-8 (MLNYVLKR). Residues 9–29 (LLGLIPTLLIVAVLVFLFVHL) traverse the membrane as a helical segment. Residues 30-102 (LPGDPARLIA…SRFLPTLWLT (73 aa)) lie on the Periplasmic side of the membrane. An ABC transmembrane type-1 domain is found at 95-292 (FLPTLWLTIT…LEFILINLVV (198 aa)). Residues 103-123 (ITSMIWAVLFGMAIGIAAAVW) traverse the membrane as a helical segment. At 124–134 (RNRWPDRVGMT) the chain is on the cytoplasmic side. Residues 135-155 (LAVTGISFPAFALGMLLMQIF) form a helical membrane-spanning segment. At 156–168 (SVDLGWLPTVGAD) the chain is on the periplasmic side. Residues 169–189 (SWQHYILPSLTLGAAVASVMA) traverse the membrane as a helical segment. Residues 190-228 (RFTRSSFVDVLSEDYMRTARAKGVSETWVVLKHGLRNAM) are Cytoplasmic-facing. The helical transmembrane segment at 229–249 (IPVVTMMGLQFGFLLGGSIVV) threads the bilayer. Residues 250-278 (EKVFNWPGLGRLLVDSVDMRDYPVIQAEV) are Periplasmic-facing. Residues 279 to 299 (LLFSLEFILINLVVDVLYAAI) form a helical membrane-spanning segment. Over 300-306 (NPAIRYK) the chain is Cytoplasmic.

Belongs to the binding-protein-dependent transport system permease family. In terms of assembly, the complex is composed of two ATP-binding proteins (GsiA), two transmembrane proteins (GsiC and GsiD) and a solute-binding protein (GsiB).

It is found in the cell inner membrane. Its function is as follows. Part of the ABC transporter complex GsiABCD involved in glutathione import. Probably responsible for the translocation of the substrate across the membrane. This is Glutathione transport system permease protein GsiC from Salmonella choleraesuis (strain SC-B67).